We begin with the raw amino-acid sequence, 404 residues long: 11-beta-hydroxysteroid dehydrogenase type 2 (404 aa).

82 to 111 (TRAVLITGCDSGFGNATAKKLDTMGFTVLA) lines the NAD(+) pocket. Residue Ser-219 coordinates substrate. Tyr-232 functions as the Proton acceptor in the catalytic mechanism. The interval 383–404 (LTSARDIAQDQGPRPDPSPTAQ) is disordered.

Belongs to the short-chain dehydrogenases/reductases (SDR) family. Interacts with ligand-free cytoplasmic NR3C2. As to expression, highly expressed in kidney, adrenal and colon; detected at lower levels on lung, liver, and spleen. Expressed in oocytes. Expressed in uterine tissues and in corpora lutea.

It is found in the microsome. The protein resides in the endoplasmic reticulum. The enzyme catalyses an 11beta-hydroxysteroid + NAD(+) = an 11-oxosteroid + NADH + H(+). It carries out the reaction corticosterone + NAD(+) = 11-dehydrocorticosterone + NADH + H(+). It catalyses the reaction cortisol + NAD(+) = cortisone + NADH + H(+). The catalysed reaction is 11beta,17beta-dihydroxyandrost-4-ene-3-one + NAD(+) = 17beta-hydroxyandrost-4-ene-3,11-dione + NADH + H(+). The enzyme catalyses 11beta-hydroxyandrost-4-ene-3,17-dione + NAD(+) = androst-4-ene-3,11,17-trione + NADH + H(+). It participates in steroid metabolism. Inhibited by glycyrrhetinic acid, carbenoloxone, 11-alpha-OH-progesterone and 11-beta-OH-progesterone. Its function is as follows. Catalyzes the conversion of biologically active 11beta-hydroxyglucocorticoids (11beta-hydroxysteroid) such as cortisol, to inactive 11-ketoglucocorticoids (11-oxosteroid) such as cortisone, in the presence of NAD(+). Functions as a dehydrogenase (oxidase), thereby decreasing the concentration of active glucocorticoids, thus protecting the nonselective mineralocorticoid receptor from occupation by glucocorticoids. Affinity towards corticosterone is higher than cortisol or dexamethasone. Plays an important role in maintaining glucocorticoids balance during preimplantation and protects the fetus from excessive maternal corticosterone exposure. Catalyzes the oxidation of 11beta-hydroxytestosterone (11beta,17beta-dihydroxyandrost-4-ene-3-one) to 11-ketotestosterone (17beta-hydroxyandrost-4-ene-3,11-dione), a major bioactive androgen. Catalyzes the conversion of 11beta-hydroxyandrostenedione (11beta-hydroxyandrost-4-ene-3,17-dione) to 11-ketoandrostenedione (androst-4-ene-3,11,17-trione), which can be further metabolized to 11-ketotestosterone. Converts 7-beta-25-dihydroxycholesterol to 7-oxo-25-hydroxycholesterol in vitro. 7-beta-25-dihydroxycholesterol (not 7-oxo-25-hydroxycholesterol) acts as ligand for the G-protein-coupled receptor (GPCR) Epstein-Barr virus-induced gene 2 (EBI2) and may thereby regulate immune cell migration. May protect ovulating oocytes and fertilizing spermatozoa from the adverse effects of cortisol. This Bos taurus (Bovine) protein is 11-beta-hydroxysteroid dehydrogenase type 2 (HSD11B2).